The sequence spans 108 residues: MTVQRIFRLSSVLRSAVSVHLRRNIGVTAVAFNKELDPVQKLFLDKIREYKAKRLASGGPVDTGPEYQQEVDRELFKLKQMYGKGEMDKFPTFNFEDPKFEVLDKPQS.

The N-terminal 32 residues, M1–F32, are a transit peptide targeting the mitochondrion. 3 positions are modified to N6-acetyllysine: K41, K46, and K79. K84 and K99 each carry N6-acetyllysine; alternate. N6-succinyllysine; alternate occurs at positions 84 and 99. K105 is modified (N6-acetyllysine). S108 is modified (phosphoserine).

The protein belongs to the eukaryotic ATPase subunit F6 family. Component of the ATP synthase complex composed at least of ATP5F1A/subunit alpha, ATP5F1B/subunit beta, ATP5MC1/subunit c (homooctomer), MT-ATP6/subunit a, MT-ATP8/subunit 8, ATP5ME/subunit e, ATP5MF/subunit f, ATP5MG/subunit g, ATP5MK/subunit k, ATP5MJ/subunit j, ATP5F1C/subunit gamma, ATP5F1D/subunit delta, ATP5F1E/subunit epsilon, ATP5PF/subunit F6, ATP5PB/subunit b, ATP5PD/subunit d, ATP5PO/subunit OSCP. ATP synthase complex consists of a soluble F(1) head domain (subunits alpha(3) and beta(3)) - the catalytic core - and a membrane F(0) domain - the membrane proton channel (subunits c, a, 8, e, f, g, k and j). These two domains are linked by a central stalk (subunits gamma, delta, and epsilon) rotating inside the F1 region and a stationary peripheral stalk (subunits F6, b, d, and OSCP).

The protein localises to the mitochondrion. It is found in the mitochondrion inner membrane. In terms of biological role, subunit F6, of the mitochondrial membrane ATP synthase complex (F(1)F(0) ATP synthase or Complex V) that produces ATP from ADP in the presence of a proton gradient across the membrane which is generated by electron transport complexes of the respiratory chain. ATP synthase complex consist of a soluble F(1) head domain - the catalytic core - and a membrane F(1) domain - the membrane proton channel. These two domains are linked by a central stalk rotating inside the F(1) region and a stationary peripheral stalk. During catalysis, ATP synthesis in the catalytic domain of F(1) is coupled via a rotary mechanism of the central stalk subunits to proton translocation. In vivo, can only synthesize ATP although its ATP hydrolase activity can be activated artificially in vitro. Part of the complex F(0) domain. Part of the complex F(0) domain and the peripheric stalk, which acts as a stator to hold the catalytic alpha(3)beta(3) subcomplex and subunit a/ATP6 static relative to the rotary elements. This chain is ATP synthase peripheral stalk subunit F6, mitochondrial, found in Rattus norvegicus (Rat).